The sequence spans 871 residues: Probable inorganic carbon transporter subunit DabA (871 aa).

Zn(2+) contacts are provided by C396, D398, H577, and C592.

This sequence belongs to the inorganic carbon transporter (TC 9.A.2) DabA family. As to quaternary structure, forms a complex with DabB. Zn(2+) serves as cofactor.

The protein localises to the cell membrane. Its function is as follows. Part of an energy-coupled inorganic carbon pump. This is Probable inorganic carbon transporter subunit DabA from Bacillus subtilis (strain 168).